Consider the following 225-residue polypeptide: Cytochrome c oxidase subunit 2 (225 aa).

At 1–25 (MSTWFMFMFQESNSYYADNLISFHN) the chain is on the mitochondrial intermembrane side. The helical transmembrane segment at 26 to 47 (MVMMIIIMISTLTVYIILDLFM) threads the bilayer. At 48–62 (NKFSNLFLLKNHNIE) the chain is on the mitochondrial matrix side. The chain crosses the membrane as a helical span at residues 63-82 (IIWTIIPIIILLIICFPSLK). At 83–225 (ILYLIDEIVN…YFLNWVNKQI (143 aa)) the chain is on the mitochondrial intermembrane side. Cu cation-binding residues include His159, Cys194, Glu196, Cys198, His202, and Met205. Position 196 (Glu196) interacts with Mg(2+).

The protein belongs to the cytochrome c oxidase subunit 2 family. As to quaternary structure, component of the cytochrome c oxidase (complex IV, CIV), a multisubunit enzyme composed of a catalytic core of 3 subunits and several supernumerary subunits. The complex exists as a monomer or a dimer and forms supercomplexes (SCs) in the inner mitochondrial membrane with ubiquinol-cytochrome c oxidoreductase (cytochrome b-c1 complex, complex III, CIII). Cu cation is required as a cofactor.

The protein resides in the mitochondrion inner membrane. It carries out the reaction 4 Fe(II)-[cytochrome c] + O2 + 8 H(+)(in) = 4 Fe(III)-[cytochrome c] + 2 H2O + 4 H(+)(out). Component of the cytochrome c oxidase, the last enzyme in the mitochondrial electron transport chain which drives oxidative phosphorylation. The respiratory chain contains 3 multisubunit complexes succinate dehydrogenase (complex II, CII), ubiquinol-cytochrome c oxidoreductase (cytochrome b-c1 complex, complex III, CIII) and cytochrome c oxidase (complex IV, CIV), that cooperate to transfer electrons derived from NADH and succinate to molecular oxygen, creating an electrochemical gradient over the inner membrane that drives transmembrane transport and the ATP synthase. Cytochrome c oxidase is the component of the respiratory chain that catalyzes the reduction of oxygen to water. Electrons originating from reduced cytochrome c in the intermembrane space (IMS) are transferred via the dinuclear copper A center (CU(A)) of subunit 2 and heme A of subunit 1 to the active site in subunit 1, a binuclear center (BNC) formed by heme A3 and copper B (CU(B)). The BNC reduces molecular oxygen to 2 water molecules using 4 electrons from cytochrome c in the IMS and 4 protons from the mitochondrial matrix. The chain is Cytochrome c oxidase subunit 2 (COII) from Apis mellifera ligustica (Common honeybee).